Consider the following 225-residue polypeptide: Glutathione S-transferase U3 (225 aa).

A GST N-terminal domain is found at 6 to 86 (EGVKLIGSWA…YIDQTWTNNP (81 aa)). Residues 16 to 17 (SP), 43 to 44 (VK), 57 to 58 (KV), and 70 to 71 (ES) each bind glutathione. Residues 91-218 (SPYDKAMARF…EKHIEHMMKI (128 aa)) form the GST C-terminal domain. Residue Thr-152 is modified to Phosphothreonine.

The protein belongs to the GST superfamily. Tau family.

It localises to the cytoplasm. The protein localises to the cytosol. The catalysed reaction is RX + glutathione = an S-substituted glutathione + a halide anion + H(+). In terms of biological role, may be involved in the conjugation of reduced glutathione to a wide number of exogenous and endogenous hydrophobic electrophiles and have a detoxification role against certain herbicides. The chain is Glutathione S-transferase U3 (GSTU3) from Arabidopsis thaliana (Mouse-ear cress).